The chain runs to 453 residues: Pup--protein ligase (453 aa).

Glu9 serves as a coordination point for Mg(2+). Position 53 (Arg53) interacts with ATP. Tyr55 lines the Mg(2+) pocket. Catalysis depends on Asp57, which acts as the Proton acceptor. Glu63 lines the Mg(2+) pocket. ATP contacts are provided by Thr66 and Trp420.

Belongs to the Pup ligase/Pup deamidase family. Pup-conjugating enzyme subfamily.

It catalyses the reaction ATP + [prokaryotic ubiquitin-like protein]-L-glutamate + [protein]-L-lysine = ADP + phosphate + N(6)-([prokaryotic ubiquitin-like protein]-gamma-L-glutamyl)-[protein]-L-lysine.. Its pathway is protein degradation; proteasomal Pup-dependent pathway. The protein operates within protein modification; protein pupylation. Functionally, catalyzes the covalent attachment of the prokaryotic ubiquitin-like protein modifier Pup to the proteasomal substrate proteins, thereby targeting them for proteasomal degradation. This tagging system is termed pupylation. The ligation reaction involves the side-chain carboxylate of the C-terminal glutamate of Pup and the side-chain amino group of a substrate lysine. This Streptomyces scabiei (strain 87.22) protein is Pup--protein ligase.